We begin with the raw amino-acid sequence, 620 residues long: Proline--tRNA ligase (620 aa).

Belongs to the class-II aminoacyl-tRNA synthetase family. ProS type 1 subfamily. Homodimer.

The protein localises to the cytoplasm. The enzyme catalyses tRNA(Pro) + L-proline + ATP = L-prolyl-tRNA(Pro) + AMP + diphosphate. Its function is as follows. Catalyzes the attachment of proline to tRNA(Pro) in a two-step reaction: proline is first activated by ATP to form Pro-AMP and then transferred to the acceptor end of tRNA(Pro). As ProRS can inadvertently accommodate and process non-cognate amino acids such as alanine and cysteine, to avoid such errors it has two additional distinct editing activities against alanine. One activity is designated as 'pretransfer' editing and involves the tRNA(Pro)-independent hydrolysis of activated Ala-AMP. The other activity is designated 'posttransfer' editing and involves deacylation of mischarged Ala-tRNA(Pro). The misacylated Cys-tRNA(Pro) is not edited by ProRS. The polypeptide is Proline--tRNA ligase (Streptococcus thermophilus (strain ATCC BAA-491 / LMD-9)).